A 33-amino-acid polypeptide reads, in one-letter code: Beta-theraphotoxin-Cm1a (33 aa).

3 cysteine pairs are disulfide-bonded: Cys2–Cys17, Cys9–Cys22, and Cys16–Cys29. The residue at position 33 (Leu33) is a Leucine amide.

Belongs to the neurotoxin 10 (Hwtx-1) family. 04 (CcoTx1) subfamily. In terms of tissue distribution, expressed by the venom gland.

The protein resides in the secreted. In terms of biological role, inhibits many voltage-gated sodium channels and one voltage-gated calcium channel (Cav2.2/CACNA1B (IC(50)=400 nM), Nav1.2/SCN2A (IC(50)=3-70 nM), Nav1.1/SCN1A (IC(50)=523-1060 nM), Nav1.7/SCN9A (IC(50)=129.1-5120 nM), Nav1.4/SCN4A (IC(50)=263-888 nM or &gt;10 uM) and Nav1.5/SCN5A (IC(50)=188-323 nM or &gt;10 uM)). It acts by shifting the voltage dependence of channel activation to more depolarized potentials and by blocking the inward component of the sodium current. It shows moderate affinity for lipid bilayers. On Nav1.7/SCN9A, it has been shown to interact with the S3-S4 loop of domain DII (site 4). Is significantly more potent against Nav1.2/SCN2A than the other Nav channel subtypes. In vivo, this toxin causes general ataxia, lack of response to stimuli, and semiparalysis. After a few minutes, the mice are unable to stand, and breathing is reduced in rhythm and intensity. Symptoms gradually increase with progressive slowing of breathing and flaccid paralysis, death occurred within 10 to 20 minutes post injection. Animals remain totally flaccid, and no symptoms of excitatory neurotoxicity are observed. The polypeptide is Beta-theraphotoxin-Cm1a (Ceratogyrus marshalli (Straighthorned baboon tarantula)).